The following is a 240-amino-acid chain: Dihydromonapterin reductase (240 aa).

Tyrosine 152 acts as the Proton acceptor in catalysis.

This sequence belongs to the short-chain dehydrogenases/reductases (SDR) family. FolM subfamily.

It catalyses the reaction (6S)-5,6,7,8-tetrahydrofolate + NADP(+) = 7,8-dihydrofolate + NADPH + H(+). The catalysed reaction is 7,8-dihydromonapterin + NADPH + H(+) = 5,6,7,8-tetrahydromonapterin + NADP(+). In terms of biological role, catalyzes the reduction of dihydromonapterin to tetrahydromonapterin. Also has lower activity with dihydrofolate. This Escherichia coli O6:H1 (strain CFT073 / ATCC 700928 / UPEC) protein is Dihydromonapterin reductase (folM).